Here is a 269-residue protein sequence, read N- to C-terminus: MKKLDYHFHSHFSADSEELPRKHVTEAIAHGLEEICFTEHRDFYFPGMDFSLNLPEYFQEINRLQAEFKDKIKIKIGLEMGIDLRFKSEINQFIDSAPFDFVIASVHEIGDIEVYDGTEFYLQKIKEEAQREYLLACLDVVQNFENYNSFGHLDYVARYGPYTDKSIKFAENREILFEILRALASKEKALEINTRLFDDPKTEQFYSDLLINFKKLGGKFITLGTDSHIAKRDWLSIHKARTLIKKAGFHELATFSGMKIDKNKKSIKE.

Belongs to the PHP hydrolase family. HisK subfamily.

The catalysed reaction is L-histidinol phosphate + H2O = L-histidinol + phosphate. Its pathway is amino-acid biosynthesis; L-histidine biosynthesis; L-histidine from 5-phospho-alpha-D-ribose 1-diphosphate: step 8/9. This Lactococcus lactis subsp. lactis (strain IL1403) (Streptococcus lactis) protein is Histidinol-phosphatase (hisK).